The following is a 361-amino-acid chain: Tegument protein UL51 homolog (361 aa).

Cysteine 8 is lipidated: S-palmitoyl cysteine; by host. A disordered region spans residues 251 to 299 (GDEEDEVTVMSPSPEPVQQQPPVEPVQQQPQGRGSHRRRYKESAPQETL). A compositionally biased stretch (low complexity) spans 266–281 (PVQQQPPVEPVQQQPQ).

This sequence belongs to the herpesviridae UL51 family. As to quaternary structure, oligomerizes. Interacts with UL103; this interaction mediates UL103 incorporation to virions. Post-translationally, phosphorylated. In terms of processing, palmitoylation is necessary for Golgi localization.

It localises to the virion tegument. The protein resides in the host cytoplasm. It is found in the host Golgi apparatus. Plays several roles during the time course of infection, including egress of virus particles from the perinuclear space and secondary envelopment of cytoplasmic capsids that bud into specific trans-Golgi network (TGN)-derived membranes. The protein is Tegument protein UL51 homolog (UL71) of Homo sapiens (Human).